A 937-amino-acid polypeptide reads, in one-letter code: Aconitate hydratase A (937 aa).

[4Fe-4S] cluster contacts are provided by Cys439, Cys505, and Cys508. Positions 898–921 (KKESKSTQSTTSKGCGSADTSSET) are disordered.

It belongs to the aconitase/IPM isomerase family. Monomer. The cofactor is [4Fe-4S] cluster.

The enzyme catalyses citrate = D-threo-isocitrate. The catalysed reaction is (2S,3R)-3-hydroxybutane-1,2,3-tricarboxylate = 2-methyl-cis-aconitate + H2O. It participates in carbohydrate metabolism; tricarboxylic acid cycle; isocitrate from oxaloacetate: step 2/2. It functions in the pathway organic acid metabolism; propanoate degradation. In terms of biological role, involved in the catabolism of short chain fatty acids (SCFA) via the tricarboxylic acid (TCA)(acetyl degradation route) and probably the 2-methylcitrate cycle I (propionate degradation route). Catalyzes the reversible isomerization of citrate to isocitrate via cis-aconitate. Could catalyze the hydration of 2-methyl-cis-aconitate to yield (2R,3S)-2-methylisocitrate. The apo form of AcnA functions as a RNA-binding regulatory protein. The polypeptide is Aconitate hydratase A (acn) (Francisella tularensis subsp. holarctica (strain LVS)).